Here is a 319-residue protein sequence, read N- to C-terminus: Type II methyltransferase M.MpnI (319 aa).

The protein belongs to the N(4)/N(6)-methyltransferase family.

The catalysed reaction is a 2'-deoxyadenosine in DNA + S-adenosyl-L-methionine = an N(6)-methyl-2'-deoxyadenosine in DNA + S-adenosyl-L-homocysteine + H(+). Its function is as follows. A methylase that recognizes the double-stranded sequence 5'-CTAT-3' and methylates A-3 on one strand; probably responsible for all of the methylation on this site in the genome. In Mycoplasma pneumoniae (strain ATCC 29342 / M129 / Subtype 1) (Mycoplasmoides pneumoniae), this protein is Type II methyltransferase M.MpnI.